Consider the following 115-residue polypeptide: MLFSSLLCVFVAFSYSGSSVAQKVTQAQSSVSMPVRKAVTLNCLYETSWWSYYIFWYKQLPSKEMIFLIRQGSDEQNAKSGRYSVNFKKAAKSVALTISALQLEDSAKYFCALGE.

An N-terminal signal peptide occupies residues 1–21 (MLFSSLLCVFVAFSYSGSSVA). Residues 22–115 (QKVTQAQSSV…SAKYFCALGE (94 aa)) enclose the Ig-like domain. A disulfide bridge links cysteine 43 with cysteine 111.

In terms of assembly, gamma-delta TR is a heterodimer composed of a gamma and delta chain; disulfide-linked. The gamma-delta TR is associated with the transmembrane signaling CD3 coreceptor proteins following the stoichiometry: a single gamma-delta TR heterodimer associates with one CD3D-CD3E heterodimer, one CD3G-CD3E heterodimer and one CD247 homodimer forming a stable octameric structure. Upon activation, gamma-delta TR complex associates with FCER1G to initiate intracellular signaling.

It is found in the cell membrane. Functionally, v region of the variable domain of T cell receptor (TR) delta chain that participates in the antigen recognition. Gamma-delta TRs recognize a variety of self and foreign non-peptide antigens frequently expressed at the epithelial boundaries between the host and external environment, including endogenous lipids presented by MH-like protein CD1D and phosphoantigens presented by butyrophilin-like molecule BTN3A1. Upon antigen recognition induces rapid, innate-like immune responses involved in pathogen clearance and tissue repair. Binding of gamma-delta TR complex to antigen triggers phosphorylation of immunoreceptor tyrosine-based activation motifs (ITAMs) in the CD3 chains by the LCK and FYN kinases, allowing the recruitment, phosphorylation, and activation of ZAP70 that facilitates phosphorylation of the scaffolding proteins LCP2 and LAT. This lead to the formation of a supramolecular signalosome that recruits the phospholipase PLCG1, resulting in calcium mobilization and ERK activation, ultimately leading to T cell expansion and differentiation into effector cells. Gamma-delta TRs are produced through somatic rearrangement of a limited repertoire of variable (V), diversity (D), and joining (J) genes. The potential diversity of gamma-delta TRs is conferred by the unique ability to rearrange (D) genes in tandem and to utilize all three reading frames. The combinatorial diversity is considerably increased by the sequence exonuclease trimming and random nucleotide (N) region additions which occur during the V-(D)-J rearrangements. In Homo sapiens (Human), this protein is T cell receptor delta variable 1.